The sequence spans 763 residues: Ras and Rab interactor 1 (763 aa).

Met-1 carries the post-translational modification N-acetylmethionine. The interval 1–52 (MEDPGETGAHPLGATNLNFVPGHQQKEKPSTDPLYDTPDTRGVQAGGSQQPA) is disordered. Tyr-35 is modified (phosphotyrosine; by ABL1 and ABL2). The region spanning 68–151 (WLQLRANAAA…QLICGYCRTR (84 aa)) is the SH2 domain. Disordered regions lie at residues 177–200 (LNTKDQQRPSEAPPIPRLKARSPQ), 238–273 (STETSSPLSPPAVPPPPVPVLPGTSSSQTERLPPRQ), and 301–331 (QEVDCCSPSSSEEEGSSGSPTTSPRLSRPRH). A phosphoserine mark is found at Ser-198, Ser-246, Ser-319, and Ser-323. Over residues 245-257 (LSPPAVPPPPVPV) the composition is skewed to pro residues. Residues 316–326 (SSGSPTTSPRL) are compositionally biased toward low complexity. Phosphoserine; by PKD/PRKD1 is present on Ser-340. The 143-residue stretch at 445–587 (LSADGSLGRL…LSGLSQARAL (143 aa)) folds into the VPS9 domain. Ser-598 bears the Phosphoserine mark. Positions 613–695 (FQHLLRVAYQ…GYLIYRRAER (83 aa)) constitute a Ras-associating domain. Arg-681 is subject to Omega-N-methylarginine. Positions 698-763 (TQGAVAEKAK…KAEGSQALEE (66 aa)) are disordered. Basic and acidic residues predominate over residues 727 to 755 (REGKPRIAVDQEGKDQARGGHIGPEEQKA).

Belongs to the RIN (Ras interaction/interference) family. In terms of assembly, interacts with the GTP-bound form of Ras proteins (NRAS, HRAS and KRAS). This interaction prevents the association between RAF1 and Ras. Interacts with 14-3-3 proteins YWHAB, YWHAE and YWHAZ when phosphorylated on Ser-340. Interacts with the SH3 domain of ABL1 and ABL2. Interacts with RAB5A. The interaction with Ras is probably regulated and antagonized by the interaction with 14-3-3 proteins. The interaction with 14-3-3 proteins is regulated by phosphorylation on Ser-340. In terms of processing, phosphorylated on tyrosine residues by ABL1 and ABL2. Phosphorylation at Ser-340 by PRKD1 induces interaction with 14-3-3 proteins. In terms of tissue distribution, highly expressed in brain. Weakly or no expressed in other tissues, except in testis, where it is expressed at intermediate level. In brain, it is mainly expressed in postnatal forebrain neurons in which it is localized in dendrites and colocalizes with Ras.

The protein localises to the cytoplasm. The protein resides in the membrane. It is found in the cytoskeleton. Functionally, ras effector protein, which may serve as an inhibitory modulator of neuronal plasticity in aversive memory formation. Can affect Ras signaling at different levels. First, by competing with RAF1 protein for binding to activated Ras. Second, by enhancing signaling from ABL1 and ABL2, which regulate cytoskeletal remodeling. Third, by activating RAB5A, possibly by functioning as a guanine nucleotide exchange factor (GEF) for RAB5A, by exchanging bound GDP for free GTP, and facilitating Ras-activated receptor endocytosis. This chain is Ras and Rab interactor 1 (Rin1), found in Mus musculus (Mouse).